The chain runs to 510 residues: Photosystem II CP47 reaction center protein (510 aa).

At 2–16 the chain is on the cytoplasmic side; the sequence is GLPWYRVHTVLINDP. The helical transmembrane segment at 17-37 threads the bilayer; sequence GRLIAAHLMHTALVAGWAGSM. Residues 38 to 94 are Lumenal-facing; the sequence is ALYELATFDPSDPVLNPMWRQGMFVLPFMARLGVTGSWSGWSITGETGIDPGFWSFE. The helical transmembrane segment at 95-116 threads the bilayer; sequence GVALAHIVLSGLLFLAACWHWV. Residues 117-134 are Cytoplasmic-facing; it reads YWDLELFRDPRTGEPALD. The helical transmembrane segment at 135-157 threads the bilayer; that stretch reads LPKMFGIHLFLAGLLCFGFGAFH. The Lumenal segment spans residues 158–196; that stretch reads LTGLFGPGMWVSDPYGLTGSVQPVAPEWGPDGFNPYNPG. The helical transmembrane segment at 197 to 218 threads the bilayer; the sequence is GVVAHHIAAGIVGIIAGLFHIL. Over 219–233 the chain is Cytoplasmic; sequence VRPPQRLYKALRMGN. The helical transmembrane segment at 234–254 threads the bilayer; that stretch reads IETVLSSSIAAVFFAAFVVAG. Residues 255-450 are Lumenal-facing; that stretch reads TMWYGSATTP…GIFRTSPRGW (196 aa). A helical membrane pass occupies residues 451–473; that stretch reads FTFAHAVFALLFFFGHIWHGART. Residues 474 to 510 are Cytoplasmic-facing; the sequence is LFRDVFSGIDPELSPEQVEWGFYQKVGDVTTRRKEAV.

PSII is composed of 1 copy each of membrane proteins PsbA, PsbB, PsbC, PsbD, PsbE, PsbF, PsbH, PsbI, PsbJ, PsbK, PsbL, PsbM, PsbT, PsbX, PsbY, PsbZ, Psb30/Ycf12, peripheral proteins PsbO, CyanoQ (PsbQ), PsbU, PsbV and a large number of cofactors. It forms dimeric complexes. Part of a photosystem II (PSII) assembly intermediate complex PSII-I; crystallized from a strain deleted of psbJ, it forms monomeric PSII before addition of the oxygen evolving complex. PSII-I includes 3 assembly factors not found in mature PSII (Psb27, Psb28 and Psb34). Binds multiple chlorophylls. PSII binds additional chlorophylls, carotenoids and specific lipids. serves as cofactor.

It is found in the cellular thylakoid membrane. Functionally, one of the components of the core complex of photosystem II (PSII). It binds chlorophyll and helps catalyze the primary light-induced photochemical processes of PSII. PSII is a light-driven water:plastoquinone oxidoreductase, using light energy to abstract electrons from H(2)O, generating O(2) and a proton gradient subsequently used for ATP formation. The chain is Photosystem II CP47 reaction center protein from Thermosynechococcus vestitus (strain NIES-2133 / IAM M-273 / BP-1).